The following is a 61-amino-acid chain: UPF0434 protein PFL_1779 (61 aa).

The protein belongs to the UPF0434 family.

This Pseudomonas fluorescens (strain ATCC BAA-477 / NRRL B-23932 / Pf-5) protein is UPF0434 protein PFL_1779.